The primary structure comprises 446 residues: D-inositol 3-phosphate glycosyltransferase (446 aa).

Residue His19 participates in 1D-myo-inositol 3-phosphate binding. UDP-N-acetyl-alpha-D-glucosamine is bound by residues Gln25 to Pro26 and Gly33. 1D-myo-inositol 3-phosphate contacts are provided by residues Asp30 to Asn35, Lys88, Tyr121, Thr145, and Arg165. Arg239, Lys244, and Gln303 together coordinate UDP-N-acetyl-alpha-D-glucosamine. Mg(2+)-binding residues include Tyr312, Arg313, and Ser315. UDP-N-acetyl-alpha-D-glucosamine-binding residues include Glu325 and Glu333. Position 339 (Thr339) interacts with Mg(2+).

The protein belongs to the glycosyltransferase group 1 family. MshA subfamily. As to quaternary structure, homodimer.

It carries out the reaction 1D-myo-inositol 3-phosphate + UDP-N-acetyl-alpha-D-glucosamine = 1D-myo-inositol 2-acetamido-2-deoxy-alpha-D-glucopyranoside 3-phosphate + UDP + H(+). Its function is as follows. Catalyzes the transfer of a N-acetyl-glucosamine moiety to 1D-myo-inositol 3-phosphate to produce 1D-myo-inositol 2-acetamido-2-deoxy-glucopyranoside 3-phosphate in the mycothiol biosynthesis pathway. This chain is D-inositol 3-phosphate glycosyltransferase, found in Rhodococcus opacus (strain B4).